A 753-amino-acid chain; its full sequence is MTILNHTLGFPRVGLRRELKKAQESYWAGNSTREELLTVGRELRARHWDQQKQAGIDLLPVGDFAWYDHVLTTSLLLGNVPPRHQNKDGSVDIDTLFRIGRGRAPTGEPAAAAEMTKWFNTNYHYMVPEFVKGQQFKLTWTQLLEEVDEALALGHNVKPVLLGPVTYLWLGKVKGEQFDRLSLLNDILPVYQQVLAELAKRGIEWVQIDEPALVLELPQAWLDAYKPAYDALQGQVKLLLTTYFEGVTPNLDTITALPVQGLHVDLVHGKDDVAELHKRLPSDWLLSAGLINGRNVWRADLTEKYAQIKDIVGKRDLWVASSCSLLHSPIDLSVETRLDAEVKSWFAFALQKCHELALLRDALNSGDTAALAEWSAPIQARRHSTRVHNPAVEKRLAAITAQDSQRANVYEVRAEAQRARFKLPAWPTTTIGSFPQTTEIRTLRLDFKKGNLDANNYRTGIAEHIRQAIVEQERLGLDVLVHGEAERNDMVEYFGEHLDGFVFTQNGWVQSYGSRCVKPPIVIGDISRPAPITVEWAKYAQSLTDKPVKGMLTGPVTILCWSFPREDVSRETIAKQIALALRDEVADLEAAGIGIIQIDEPALREGLPLRRSDWDAYLQWGVEAFRINAAVAKDDTQIHTHMCYCEFNDIMDSIAALDADVITIETSRSDMELLESFEEFDYPNEIGPGVYDIHSPNVPSVEWIEALLKKAAKRIPAERLWVNPDCGLKTRGWPETRAALANMVQAAQNLRRG.

Residues 17–20 (RELK) and Lys117 contribute to the 5-methyltetrahydropteroyltri-L-glutamate site. L-homocysteine is bound by residues 431-433 (IGS) and Glu484. L-methionine contacts are provided by residues 431 to 433 (IGS) and Glu484. 5-methyltetrahydropteroyltri-L-glutamate contacts are provided by residues 515–516 (RC) and Trp561. Asp599 provides a ligand contact to L-homocysteine. Residue Asp599 participates in L-methionine binding. Glu605 contacts 5-methyltetrahydropteroyltri-L-glutamate. Positions 641, 643, and 665 each coordinate Zn(2+). The active-site Proton donor is the His694. Cys726 lines the Zn(2+) pocket.

The protein belongs to the vitamin-B12 independent methionine synthase family. Zn(2+) serves as cofactor.

The catalysed reaction is 5-methyltetrahydropteroyltri-L-glutamate + L-homocysteine = tetrahydropteroyltri-L-glutamate + L-methionine. Its pathway is amino-acid biosynthesis; L-methionine biosynthesis via de novo pathway; L-methionine from L-homocysteine (MetE route): step 1/1. Catalyzes the transfer of a methyl group from 5-methyltetrahydrofolate to homocysteine resulting in methionine formation. This is 5-methyltetrahydropteroyltriglutamate--homocysteine methyltransferase from Escherichia coli O139:H28 (strain E24377A / ETEC).